The primary structure comprises 374 residues: Glutamate 5-kinase (374 aa).

Lys16 is an ATP binding site. Substrate-binding residues include Ser56, Asp143, and Asn155. An ATP-binding site is contributed by 175-176 (TD). Residues 282–360 (RGRVVLDAGA…SEIEAVLGYV (79 aa)) enclose the PUA domain.

Belongs to the glutamate 5-kinase family.

Its subcellular location is the cytoplasm. It carries out the reaction L-glutamate + ATP = L-glutamyl 5-phosphate + ADP. It functions in the pathway amino-acid biosynthesis; L-proline biosynthesis; L-glutamate 5-semialdehyde from L-glutamate: step 1/2. In terms of biological role, catalyzes the transfer of a phosphate group to glutamate to form L-glutamate 5-phosphate. The chain is Glutamate 5-kinase from Ralstonia nicotianae (strain ATCC BAA-1114 / GMI1000) (Ralstonia solanacearum).